We begin with the raw amino-acid sequence, 183 residues long: Type II secretion system protein H (183 aa).

Positions 1–5 are cleaved as a propeptide — leader sequence; sequence MRQRG. At F6 the chain carries N-methylphenylalanine. Residues 6–26 traverse the membrane as a helical segment; that stretch reads FTVLEMMLVVLLMGSAASLVI.

Type II secretion is composed of four main components: the outer membrane complex, the inner membrane complex, the cytoplasmic secretion ATPase and the periplasm-spanning pseudopilus. Interacts with core component PulG. Interacts with PulM. Cleaved by prepilin peptidase. In terms of processing, methylated by prepilin peptidase at the amino group of the N-terminal phenylalanine once the leader sequence is cleaved by prepilin peptidase.

It localises to the cell inner membrane. Functionally, component of the type II secretion system required for the energy-dependent secretion of extracellular factors such as proteases and toxins from the periplasm. Part of the pseudopilus tip complex that is critical for the recognition and binding of secretion substrates. The polypeptide is Type II secretion system protein H (pulH) (Klebsiella michiganensis (strain ATCC 8724 / DSM 4798 / JCM 20051 / NBRC 3318 / NRRL B-199 / KCTC 1686 / BUCSAV 143 / CCM 1901)).